Consider the following 110-residue polypeptide: HIT-like protein CPn_0488/CP_0266/CPj0488/CpB0508 (110 aa).

An HIT domain is found at 3–110 (VFKQIIDGLI…LGGRPLGAIA (108 aa)). A Histidine triad motif motif is present at residues 95–99 (HLHIH).

This chain is HIT-like protein CPn_0488/CP_0266/CPj0488/CpB0508, found in Chlamydia pneumoniae (Chlamydophila pneumoniae).